Here is a 437-residue protein sequence, read N- to C-terminus: UDP-sugar transporter protein SLC35A5 (437 aa).

The Cytoplasmic portion of the chain corresponds to 1–21 (MKVIFLRQLKTRGMERKCSRR). A helical transmembrane segment spans residues 22-42 (PGLGPPTLYTFLLGIIFITLS). Topologically, residues 43 to 65 (SSRILLVKYSANEENKYDYLPTT) are lumenal. A helical transmembrane segment spans residues 66-86 (VNVCSELMKLILCILVSLCVI). Topologically, residues 87-106 (KKEDHQSRHLRCTSWKEFSS) are cytoplasmic. A helical transmembrane segment spans residues 107 to 129 (FMKWSIPAFLYFLDNLIVFYVLS). Over 130 to 132 (YLQ) the chain is Lumenal. Residues 133–155 (PAMAVIFSNFSIITTALLFRIVL) form a helical membrane-spanning segment. At 156-158 (KRH) the chain is on the cytoplasmic side. Residues 159-179 (LNWIQWASLLILFLSIVALTA) traverse the membrane as a helical segment. At 180–241 (STKTSQHELA…TTARVFSHIR (62 aa)) the chain is on the lumenal side. N-linked (GlcNAc...) asparagine glycosylation is present at asparagine 217. Residues 242-262 (LGLGHVLIIVQCFISSMANIY) traverse the membrane as a helical segment. Topologically, residues 263 to 276 (NEKILKEGTQLTES) are cytoplasmic. Residues 277–297 (IFIQNSKLYFFGIVFNGLTLV) form a helical membrane-spanning segment. At 298–316 (LQSSNRDQIQNCGFFYGHN) the chain is on the lumenal side. The chain crosses the membrane as a helical span at residues 317-337 (AFSVVLIFVTAFQGLSVAFIL). The Cytoplasmic portion of the chain corresponds to 338–343 (KFLDNM). The helical transmembrane segment at 344 to 364 (FHVLMAQVTTVIITTVSVLVF) threads the bilayer. The Lumenal segment spans residues 365–367 (DFR). Residues 368-388 (PSLDFFLEAPSVLLSIFIYNA) traverse the membrane as a helical segment. Residues 389-437 (SKPQNLECAPKQERIRHLSGSLWERSSGDGEELERLTKLKSDDSDDDTL) lie on the Cytoplasmic side of the membrane. Residues serine 407, serine 429, and serine 432 each carry the phosphoserine modification. The segment at 412–437 (ERSSGDGEELERLTKLKSDDSDDDTL) is disordered. Residues 421-430 (LERLTKLKSD) are compositionally biased toward basic and acidic residues.

It belongs to the nucleotide-sugar transporter family. SLC35A subfamily. As to quaternary structure, probably forms homooligomers and heterooligomers with SLC35A1, SLC35A2, SLC35A3 and SLC35A4.

It localises to the golgi apparatus membrane. It catalyses the reaction UMP(out) + UDP-alpha-D-glucuronate(in) = UMP(in) + UDP-alpha-D-glucuronate(out). It carries out the reaction UMP(out) + UDP-N-acetyl-alpha-D-glucosamine(in) = UMP(in) + UDP-N-acetyl-alpha-D-glucosamine(out). The enzyme catalyses UDP-N-acetyl-alpha-D-galactosamine(in) + UMP(out) = UDP-N-acetyl-alpha-D-galactosamine(out) + UMP(in). Its function is as follows. Probable UDP-sugar:UMP transmembrane antiporter involved in UDP-alpha-D-glucuronate/UDP-GlcA, UDP-GlcNAc/UDP-N-acetyl-alpha-D-glucosamine and UDP-N-acetyl-alpha-D-galactosamine/UDP-GalNAc transport from the cytosol to the lumen of the Golgi. This Mus musculus (Mouse) protein is UDP-sugar transporter protein SLC35A5.